Reading from the N-terminus, the 347-residue chain is Phosphoribosylformylglycinamidine cyclo-ligase (347 aa).

The protein belongs to the AIR synthase family.

The protein resides in the cytoplasm. It catalyses the reaction 2-formamido-N(1)-(5-O-phospho-beta-D-ribosyl)acetamidine + ATP = 5-amino-1-(5-phospho-beta-D-ribosyl)imidazole + ADP + phosphate + H(+). Its pathway is purine metabolism; IMP biosynthesis via de novo pathway; 5-amino-1-(5-phospho-D-ribosyl)imidazole from N(2)-formyl-N(1)-(5-phospho-D-ribosyl)glycinamide: step 2/2. In Yersinia pestis, this protein is Phosphoribosylformylglycinamidine cyclo-ligase.